A 304-amino-acid chain; its full sequence is Acetaldehyde dehydrogenase 2 (304 aa).

The active-site Acyl-thioester intermediate is C131. NAD(+)-binding positions include 162–170 (SAGPGTRKN) and N273.

The protein belongs to the acetaldehyde dehydrogenase family.

The catalysed reaction is acetaldehyde + NAD(+) + CoA = acetyl-CoA + NADH + H(+). In Dechloromonas aromatica (strain RCB), this protein is Acetaldehyde dehydrogenase 2.